Reading from the N-terminus, the 141-residue chain is Large ribosomal subunit protein uL16 (141 aa).

It belongs to the universal ribosomal protein uL16 family. Part of the 50S ribosomal subunit.

Binds 23S rRNA and is also seen to make contacts with the A and possibly P site tRNAs. This chain is Large ribosomal subunit protein uL16, found in Geobacillus thermodenitrificans (strain NG80-2).